A 235-amino-acid chain; its full sequence is Small ribosomal subunit protein eS4 (235 aa).

The S4 RNA-binding domain occupies 37-100 (LPLGIIIRDI…NETYRMFQDE (64 aa)).

The protein belongs to the eukaryotic ribosomal protein eS4 family.

In Methanosarcina barkeri (strain Fusaro / DSM 804), this protein is Small ribosomal subunit protein eS4.